Reading from the N-terminus, the 461-residue chain is Zinc transporter 6 (461 aa).

The Cytoplasmic portion of the chain corresponds to 1-33 (MGTIHLFRKPQRSFFGKLLQEFRLVAADRRSWK). A helical membrane pass occupies residues 34–54 (ILLFGAINLTCTGFLLMWCSS). Residues 55–64 (TNSIALTAYT) lie on the Extracellular side of the membrane. The helical transmembrane segment at 65-85 (YLTIFDLFSLITCLVSYWVMM) threads the bilayer. Topologically, residues 86–98 (RKPSPAYSFGFER) are cytoplasmic. A helical transmembrane segment spans residues 99–119 (LEVLAVFASTVLAQLGALFIL). Residues 120 to 134 (KESAERFLEQPEIHT) lie on the Extracellular side of the membrane. Residues 135–155 (GRLLVGTFVALSFNLFTMLSI) form a helical membrane-spanning segment. At 156–200 (RNKPFAYVSEAASTSWLQEHVADLSRSLCGIIPGLSSIFLPRMNP) the chain is on the cytoplasmic side. Residues 201–221 (FVLIDLAGAFALCITYMLIEI) traverse the membrane as a helical segment. The Extracellular segment spans residues 222–223 (NN). A helical transmembrane segment spans residues 224 to 244 (YFAVDTASAIAIALMTFGTMY). At 245–461 (PMSVYSGKVL…TNNRIGQPRP (217 aa)) the chain is on the cytoplasmic side. The interval 362-393 (PPLKGTDDSNPVTSTPTKPSSPPPEFSFNTPG) is disordered. Positions 370–379 (SNPVTSTPTK) are enriched in low complexity.

This sequence belongs to the cation diffusion facilitator (CDF) transporter (TC 2.A.4) family. SLC30A subfamily. Heterodimer with SLC30A5; form a functional zinc ion transmembrane transporter.

It is found in the golgi apparatus. It localises to the trans-Golgi network membrane. Has probably no intrinsic transporter activity but together with SLC30A5 forms a functional zinc ion:proton antiporter heterodimer, mediating zinc entry into the lumen of organelles along the secretory pathway. As part of that zinc ion:proton antiporter, contributes to zinc ion homeostasis within the early secretory pathway and regulates the activation and folding of enzymes like alkaline phosphatases and enzymes involved in phosphatidylinositol glycan anchor biosynthesis. The chain is Zinc transporter 6 (SLC30A6) from Bos taurus (Bovine).